The chain runs to 220 residues: Cysteine-rich venom protein VAR5 (220 aa).

The signal sequence occupies residues 1-22; that stretch reads MILLKLYLTLAAILCQSRGTTS. The SCP domain maps to 41–169; it reads NKHNDLRRTV…PLKYFLVCQY (129 aa). Cystine bridges form between cysteine 77-cysteine 156, cysteine 95-cysteine 170, cysteine 151-cysteine 167, cysteine 189-cysteine 196, and cysteine 192-cysteine 201. In terms of domain architecture, ShKT spans 205–220; the sequence is CEHSNQYINCPDLTKQ.

This sequence belongs to the CRISP family. In terms of processing, contains 8 disulfide bonds. As to expression, expressed by the venom gland.

Its subcellular location is the secreted. Its function is as follows. Blocks ryanodine receptors, and potassium channels. The polypeptide is Cysteine-rich venom protein VAR5 (Varanus acanthurus (Ridge-tailed monitor)).